The sequence spans 223 residues: Ribonuclease T (223 aa).

The region spanning 20–194 (VVIDVETAGF…YDTERTAELF (175 aa)) is the Exonuclease domain. Asp23, Glu25, His181, and Asp186 together coordinate Mg(2+). His181 (proton donor/acceptor) is an active-site residue.

Belongs to the RNase T family. Homodimer. The cofactor is Mg(2+).

Its function is as follows. Trims short 3' overhangs of a variety of RNA species, leaving a one or two nucleotide 3' overhang. Responsible for the end-turnover of tRNA: specifically removes the terminal AMP residue from uncharged tRNA (tRNA-C-C-A). Also appears to be involved in tRNA biosynthesis. This Shewanella sp. (strain W3-18-1) protein is Ribonuclease T.